An 89-amino-acid chain; its full sequence is Small ribosomal subunit protein uS15 (89 aa).

It belongs to the universal ribosomal protein uS15 family. As to quaternary structure, part of the 30S ribosomal subunit. Forms a bridge to the 50S subunit in the 70S ribosome, contacting the 23S rRNA.

In terms of biological role, one of the primary rRNA binding proteins, it binds directly to 16S rRNA where it helps nucleate assembly of the platform of the 30S subunit by binding and bridging several RNA helices of the 16S rRNA. Its function is as follows. Forms an intersubunit bridge (bridge B4) with the 23S rRNA of the 50S subunit in the ribosome. The protein is Small ribosomal subunit protein uS15 of Methylobacterium nodulans (strain LMG 21967 / CNCM I-2342 / ORS 2060).